The following is a 306-amino-acid chain: tRNA dimethylallyltransferase 2 (306 aa).

Residue 19 to 26 (GATASGKT) coordinates ATP. 21–26 (TASGKT) contributes to the substrate binding site. The segment at 44 to 47 (DSRQ) is interaction with substrate tRNA.

It belongs to the IPP transferase family. Monomer. Mg(2+) is required as a cofactor.

The enzyme catalyses adenosine(37) in tRNA + dimethylallyl diphosphate = N(6)-dimethylallyladenosine(37) in tRNA + diphosphate. Catalyzes the transfer of a dimethylallyl group onto the adenine at position 37 in tRNAs that read codons beginning with uridine, leading to the formation of N6-(dimethylallyl)adenosine (i(6)A). The sequence is that of tRNA dimethylallyltransferase 2 from Citrifermentans bemidjiense (strain ATCC BAA-1014 / DSM 16622 / JCM 12645 / Bem) (Geobacter bemidjiensis).